A 308-amino-acid chain; its full sequence is Secreted frizzled-related protein 1 (308 aa).

Positions M1–A25 are cleaved as a signal peptide. Positions T47–M163 constitute an FZ domain. 5 disulfide bridges follow: C52–C115, C62–C108, C99–C134, C123–C160, and C127–C151. N-linked (GlcNAc...) asparagine glycosylation is present at N167. Cystine bridges form between C180-C250, C183-C252, and C197-C300. One can recognise an NTR domain in the interval C180–C300.

This sequence belongs to the secreted frizzled-related protein (sFRP) family. Interacts with WNT1, WNT2, WNT4, WNT8, MYOC and FRZD6. As to expression, highest levels in aortic endothelium, heart, spleen and eye. Lower levels in lung, brain and kidney. Weak expression in liver, skeletal muscle and the medial layer of the aorta. In the cortical brain, localized to neurons and small blood vessels. In the retina, localized to the inner and outer nuclear layers with high expression in the neuronal cell bodies. In the heart, restricted to myocytes. In lung, highest expression found in the epithelium of terminal bronchioles. In kidney, localized to the epithelium of collecting ducts of the medulla and, in spleen, expression restricted to the red pulp in cells associated with the sinuses.

The protein localises to the secreted. Soluble frizzled-related proteins (sFRPS) function as modulators of Wnt signaling through direct interaction with Wnts. They have a role in regulating cell growth and differentiation in specific cell types. SFRP1 decreases intracellular beta-catenin levels. Has antiproliferative effects on vascular cells, in vitro and in vivo, and can induce, in vivo, an angiogenic response. In vascular cell cycle, delays the G1 phase and entry into the S phase. In kidney development, inhibits tubule formation and bud growth in metanephroi. Inhibits WNT1/WNT4-mediated TCF-dependent transcription. The protein is Secreted frizzled-related protein 1 (SFRP1) of Bos taurus (Bovine).